Reading from the N-terminus, the 255-residue chain is Ribonuclease HII (255 aa).

Residues 70-255 (EYIAGVDEVG…FEPVKKILLK (186 aa)) enclose the RNase H type-2 domain. The a divalent metal cation site is built by Asp-76, Glu-77, and Asp-168.

This sequence belongs to the RNase HII family. Requires Mn(2+) as cofactor. Mg(2+) is required as a cofactor.

The protein localises to the cytoplasm. It catalyses the reaction Endonucleolytic cleavage to 5'-phosphomonoester.. Functionally, endonuclease that specifically degrades the RNA of RNA-DNA hybrids. This is Ribonuclease HII from Ligilactobacillus salivarius (strain UCC118) (Lactobacillus salivarius).